Here is a 500-residue protein sequence, read N- to C-terminus: Glycerol kinase (500 aa).

Residue Thr15 participates in ADP binding. Thr15, Thr16, and Ser17 together coordinate ATP. Position 15 (Thr15) interacts with sn-glycerol 3-phosphate. Position 19 (Arg19) interacts with ADP. Sn-glycerol 3-phosphate is bound by residues Arg85, Glu86, Tyr137, and Asp245. Residues Arg85, Glu86, Tyr137, Asp245, and Gln246 each contribute to the glycerol site. ADP is bound by residues Thr267 and Gly310. Thr267, Gly310, Gln314, and Gly411 together coordinate ATP. Positions 411 and 415 each coordinate ADP.

It belongs to the FGGY kinase family.

It carries out the reaction glycerol + ATP = sn-glycerol 3-phosphate + ADP + H(+). Its pathway is polyol metabolism; glycerol degradation via glycerol kinase pathway; sn-glycerol 3-phosphate from glycerol: step 1/1. Its activity is regulated as follows. Inhibited by fructose 1,6-bisphosphate (FBP). Its function is as follows. Key enzyme in the regulation of glycerol uptake and metabolism. Catalyzes the phosphorylation of glycerol to yield sn-glycerol 3-phosphate. This Aeromonas salmonicida (strain A449) protein is Glycerol kinase.